A 221-amino-acid polypeptide reads, in one-letter code: Cytidylate kinase 1 (221 aa).

Gly-7–Ser-15 contributes to the ATP binding site.

Belongs to the cytidylate kinase family. Type 1 subfamily.

The protein resides in the cytoplasm. The catalysed reaction is CMP + ATP = CDP + ADP. It catalyses the reaction dCMP + ATP = dCDP + ADP. In Borreliella burgdorferi (strain ATCC 35210 / DSM 4680 / CIP 102532 / B31) (Borrelia burgdorferi), this protein is Cytidylate kinase 1.